The sequence spans 439 residues: Xaa-Pro dipeptidase (439 aa).

Positions 244, 255, 335, 380, and 419 each coordinate Mn(2+).

This sequence belongs to the peptidase M24B family. Bacterial-type prolidase subfamily. The cofactor is Mn(2+).

The enzyme catalyses Xaa-L-Pro dipeptide + H2O = an L-alpha-amino acid + L-proline. Splits dipeptides with a prolyl residue in the C-terminal position. The chain is Xaa-Pro dipeptidase from Shewanella oneidensis (strain ATCC 700550 / JCM 31522 / CIP 106686 / LMG 19005 / NCIMB 14063 / MR-1).